Here is a 610-residue protein sequence, read N- to C-terminus: MDTEDLPANNAPLTVNEQLLGSCTLKFPAQDAQVIVMSGQETIRVLEVEVDTALSSAGAAESGGDEEGSGQSLEATEEAQLDGPVTTSSTTAVTVEVSAPVVQTVVSKAAISVSPAQQTSVPITVQACPQVLTQDGLASLMTGMLAQQSSLGQPLLIPLSMAGSVGGQGGLAVLTLPTATVATLPGLAAASPAGGLLKLPFAGLQAATVLNSVQTQLQAPAQAVLQPQMSALQAMQQTQTTAATTASIVQKASEPSVSVATLQTAGLSINPAIISAASLGAQPQFISSLTTTPIITSAMSNVAGLTSQLITNAQGQVIGTLPLLVNPASLAGAAAASALPAQGLQVQTVAPQLLLNSQGQIIATIGNGPTAAIPSTASVLPKATVPLTLTKTTTQGPVGKVAPSKVIIAPQPSVVKPVTSLTAAGVIACGEMPTVGQLVNKPSAVKDEEAINLEEIREFAKNFKIRRLSLGLTQTQVGQALTATEGPAYSQSAICRFEKLDITPKSAQKLKPVLERWLAEAELWNQKGQQNLMEFVGGEPSKKRKRRTSFTPQAIEVLNTYFEKNSLPTGQEITEIAKELNYDREVVRVWFCNRRQTLKNTSKINVFQSQ.

Residues 55-87 (SSAGAAESGGDEEGSGQSLEATEEAQLDGPVTT) are disordered. The POU-specific domain occupies 448–522 (EEAINLEEIR…VLERWLAEAE (75 aa)). A DNA-binding region (homeobox) is located at residues 543 to 602 (KRKRRTSFTPQAIEVLNTYFEKNSLPTGQEITEIAKELNYDREVVRVWFCNRRQTLKNTS).

This sequence belongs to the POU transcription factor family. Class-6 subfamily. In terms of tissue distribution, ubiquitously expressed during embryogenesis.

It localises to the nucleus. In terms of biological role, transcription factor that binds with high affinity to the motif 5'-TAATGARAT-3'. This is POU domain, class 6, transcription factor 1 (pou6f1) from Danio rerio (Zebrafish).